A 325-amino-acid chain; its full sequence is Glutarate 2-hydroxylase (325 aa).

Positions 160, 162, and 292 each coordinate Fe cation.

Belongs to the glutarate hydroxylase family. In terms of assembly, homotetramer. The cofactor is Fe(2+).

It catalyses the reaction glutarate + 2-oxoglutarate + O2 = (S)-2-hydroxyglutarate + succinate + CO2. It functions in the pathway amino-acid degradation. Its function is as follows. Acts as an alpha-ketoglutarate-dependent dioxygenase catalyzing hydroxylation of glutarate (GA) to L-2-hydroxyglutarate (L2HG). Functions in a L-lysine degradation pathway that proceeds via cadaverine, glutarate and L-2-hydroxyglutarate. Is extremely specific for glutarate, but it can use both 2-oxoglutarate and 2-oxoadipate (2OA) as a cosubstrate for L2HG formation. The chain is Glutarate 2-hydroxylase from Pseudomonas putida (strain ATCC 47054 / DSM 6125 / CFBP 8728 / NCIMB 11950 / KT2440).